A 170-amino-acid chain; its full sequence is Urease accessory protein UreE (170 aa).

This sequence belongs to the UreE family.

Its subcellular location is the cytoplasm. Functionally, involved in urease metallocenter assembly. Binds nickel. Probably functions as a nickel donor during metallocenter assembly. This chain is Urease accessory protein UreE, found in Helicobacter pylori (strain G27).